The following is a 143-amino-acid chain: Mediator of RNA polymerase II transcription subunit 9 (143 aa).

Positions 84–141 form a coiled coil; it reads QDCNHKIFELQKRFESAREQIRQLPGIDYNKDEQLQRLELLRNQFKLKQQLIRKYKDT.

Belongs to the Mediator complex subunit 9 family. Component of the Mediator complex.

Its subcellular location is the nucleus. Component of the Mediator complex, a coactivator involved in the regulated transcription of nearly all RNA polymerase II-dependent genes. Mediator functions as a bridge to convey information from gene-specific regulatory proteins to the basal RNA polymerase II transcription machinery. Mediator is recruited to promoters by direct interactions with regulatory proteins and serves as a scaffold for the assembly of a functional preinitiation complex with RNA polymerase II and the general transcription factors. In Drosophila pseudoobscura pseudoobscura (Fruit fly), this protein is Mediator of RNA polymerase II transcription subunit 9 (MED9).